A 252-amino-acid chain; its full sequence is Transmembrane ascorbate-dependent reductase CYB561 (252 aa).

Met-1 carries the N-acetylmethionine modification. Residues 1-17 (MESPAGRTPAPGALPYY) are Cytoplasmic-facing. A helical transmembrane segment spans residues 18–38 (VAFSQLLGLTVVAVTGAWLGA). Residues 20–221 (FSQLLGLTVV…FGAVVLYILT (202 aa)) form the Cytochrome b561 domain. Residues 39–52 (YRGGIAWESALQFN) lie on the Vesicular side of the membrane. Residues 53-73 (VHPLCMIIGLVFLQGDALLVY) form a helical membrane-spanning segment. Positions 54, 74, and 81 each coordinate heme b. The Cytoplasmic portion of the chain corresponds to 74-85 (RVFRNEAKRTTK). Positions 81 and 85 each coordinate L-ascorbate. Residues 86–106 (ILHGLLHVLAFVIALVGLVAV) form a helical membrane-spanning segment. Heme b-binding positions include His-88, 117-120 (DLYS), and His-122. The Vesicular portion of the chain corresponds to 107 to 125 (FDYHRKKGIADLYSLHSWC). The chain crosses the membrane as a helical span at residues 126 to 146 (GILVFVLFLAQWLVGLGFFLF). Residues 147 to 159 (PGASFSLRSRYRP) are Cytoplasmic-facing. Arg-154 provides a ligand contact to L-ascorbate. The helical transmembrane segment at 160–180 (QHVFFGAAIFLLSVGTALLGL) threads the bilayer. The heme b site is built by His-161 and Glu-182. Residues 181–199 (KEALLFQLGTKYSAFESEG) are Vesicular-facing. The chain crosses the membrane as a helical span at residues 200–220 (VLANVLGLLLVAFGAVVLYIL). Over 221–252 (TRADWKRPLQAEEQALSMDFKTLTEGDSPSSQ) the chain is Cytoplasmic. Heme b is bound at residue Lys-226. 2 positions are modified to phosphoserine: Ser-248 and Ser-250.

The cofactor is heme b.

The protein localises to the cytoplasmic vesicle. It localises to the secretory vesicle. Its subcellular location is the chromaffin granule membrane. It catalyses the reaction monodehydro-L-ascorbate radical(out) + L-ascorbate(in) = monodehydro-L-ascorbate radical(in) + L-ascorbate(out). Functionally, transmembrane reductase that uses ascorbate as an electron donor in the cytoplasm and transfers electrons across membranes to reduce monodehydro-L-ascorbate radical in the lumen of secretory vesicles. It is therefore involved the regeneration and homeostasis within secretory vesicles of ascorbate which in turn provides reducing equivalents needed to support the activity of intravesicular enzymes. The protein is Transmembrane ascorbate-dependent reductase CYB561 (CYB561) of Sus scrofa (Pig).